A 432-amino-acid polypeptide reads, in one-letter code: Tyrosine-protein phosphatase non-receptor type 1 (432 aa).

Position 1 is an N-acetylmethionine (methionine 1). One can recognise a Tyrosine-protein phosphatase domain in the interval 3–277 (MEKEFEEIDK…RFSYLAVIEG (275 aa)). Tyrosine 20 carries the post-translational modification Phosphotyrosine. Serine 50 is modified (phosphoserine; by CLK1, CLK2 and PKB/AKT1 or PKB/AKT2). The residue at position 66 (tyrosine 66) is a Phosphotyrosine; by EGFR. Residues aspartate 181 and 215–221 (CSAGIGR) each bind substrate. The active-site Phosphocysteine intermediate is cysteine 215. Residue cysteine 215 is modified to Cysteine persulfide. Residue cysteine 215 is modified to S-nitrosocysteine; in reversibly inhibited form. Phosphoserine; by CLK1 and CLK2 occurs at positions 242 and 243. Residue glutamine 262 participates in substrate binding. Disordered regions lie at residues 297-322 (EDLD…PHNG) and 335-399 (SEET…EEHK). Phosphoserine is present on residues serine 335, serine 362, and serine 364. Residues 354–364 (SSAMHSVSSMS) are compositionally biased toward low complexity. Threonine 367 bears the Phosphothreonine mark.

The protein belongs to the protein-tyrosine phosphatase family. Non-receptor class 1 subfamily. As to quaternary structure, interacts with EPHA3 (phosphorylated); dephosphorylates EPHA3 and may regulate its trafficking and function. Interacts with MET. Interacts with NCK1. In terms of processing, ser-50 is the major site of phosphorylation as compared to Ser-242 and Ser-243. Activated by phosphorylation at Ser-50. S-nitrosylation of Cys-215 inactivates the enzyme activity. Post-translationally, sulfhydration at Cys-215 following endoplasmic reticulum stress inactivates the enzyme activity, promoting EIF2AK3/PERK activity. In terms of tissue distribution, most abundant in testis. Also found in kidney, spleen, muscle, liver, heart and brain.

It is found in the endoplasmic reticulum membrane. The catalysed reaction is O-phospho-L-tyrosyl-[protein] + H2O = L-tyrosyl-[protein] + phosphate. Its function is as follows. Tyrosine-protein phosphatase which acts as a regulator of endoplasmic reticulum unfolded protein response. Mediates dephosphorylation of EIF2AK3/PERK; inactivating the protein kinase activity of EIF2AK3/PERK. May play an important role in CKII- and p60c-src-induced signal transduction cascades. May regulate the EFNA5-EPHA3 signaling pathway which modulates cell reorganization and cell-cell repulsion. May also regulate the hepatocyte growth factor receptor signaling pathway through dephosphorylation of MET. The chain is Tyrosine-protein phosphatase non-receptor type 1 (Ptpn1) from Mus musculus (Mouse).